The chain runs to 329 residues: Olfactory receptor 10J3 (329 aa).

The Extracellular segment spans residues 1–26 (MPKLNSTFVTEFLFEGFSSFRRQHKL). Residue Asn5 is glycosylated (N-linked (GlcNAc...) asparagine). A helical membrane pass occupies residues 27 to 47 (VFFVVFLTLYLLTLSGNVIIM). Over 48–55 (TIIRLDHH) the chain is Cytoplasmic. A helical transmembrane segment spans residues 56–76 (LHTPMYFFLCMLSISETCYTV). The Extracellular segment spans residues 77 to 100 (AIIPHMLSGLLNPHQPIATQSCAT). Residues Cys98 and Cys190 are joined by a disulfide bond. The helical transmembrane segment at 101 to 121 (QLFFYLTFGINNCFLLTVMGY) threads the bilayer. Over 122–140 (DRYVAICNPLRYSVIMGKR) the chain is Cytoplasmic. A helical membrane pass occupies residues 141–161 (ACIQLASGSLGIGLGMAIVQV). Residues 162 to 198 (TSVFGLPFCDAFVISHFFCDVRHLLKLACTDTTVNEI) lie on the Extracellular side of the membrane. The chain crosses the membrane as a helical span at residues 199–218 (INFVVSVCVLVLPMGLVFIS). Topologically, residues 219–238 (YVLIISTILKIASAEGQKKA) are cytoplasmic. The helical transmembrane segment at 239–259 (FATCASHLTVVIIHYGCASII) threads the bilayer. Residues 260–272 (YLKPKSQSSLGQD) are Extracellular-facing. The helical transmembrane segment at 273–293 (RLISVTYTHHSPTEPCCVQPE) threads the bilayer. The Cytoplasmic portion of the chain corresponds to 294–329 (EQGGQRCSAQSRGAKNSVSLMKRGCEGFSFAFINMY).

Belongs to the G-protein coupled receptor 1 family.

It is found in the cell membrane. Its function is as follows. Odorant receptor. The sequence is that of Olfactory receptor 10J3 (OR10J3) from Homo sapiens (Human).